Here is a 498-residue protein sequence, read N- to C-terminus: AP2-like ethylene-responsive transcription factor AIL7 (498 aa).

The segment covering 186 to 195 has biased composition (polar residues); it reads TSDQPLSCNN. Residues 186–220 are disordered; that stretch reads TSDQPLSCNNGERGGNSNKKKTVSKKETSDDSKKK. The segment covering 209–220 has biased composition (basic and acidic residues); that stretch reads SKKETSDDSKKK. DNA-binding regions (AP2/ERF) lie at residues 231–297 and 333–391; these read IYRG…TNFP and IYRG…TNFE. Over residues 422-451 the composition is skewed to low complexity; it reads ESPSSSSSDHNLQQQQLLPSSSPSDQNPNS. The disordered stretch occupies residues 422–452; that stretch reads ESPSSSSSDHNLQQQQLLPSSSPSDQNPNSI.

Belongs to the AP2/ERF transcription factor family. AP2 subfamily. In terms of assembly, interacts with HDG2, and possibly with HDG3, HDG7, ANL2, ATML1 and PDF2. In terms of tissue distribution, expressed in roots, seedlings, inflorescence, and siliques. Also detected at low levels in leaves.

It localises to the nucleus. Functionally, probably acts as a transcriptional activator. Binds to the GCC-box pathogenesis-related promoter element. May be involved in the regulation of gene expression by stress factors and by components of stress signal transduction pathways. This Arabidopsis thaliana (Mouse-ear cress) protein is AP2-like ethylene-responsive transcription factor AIL7.